The primary structure comprises 256 residues: Probable histidine-binding protein (256 aa).

The N-terminal stretch at 1-19 is a signal peptide; it reads MKKFLTAFLVAFTGLFLVA. The N-palmitoyl cysteine moiety is linked to residue cysteine 20. Cysteine 20 carries S-diacylglycerol cysteine lipidation.

It belongs to the bacterial solute-binding protein 3 family.

It is found in the cell membrane. Involved in histidine transport. In Campylobacter jejuni subsp. jejuni serotype O:2 (strain ATCC 700819 / NCTC 11168), this protein is Probable histidine-binding protein (hisJ).